Here is a 184-residue protein sequence, read N- to C-terminus: Photosystem I assembly protein Ycf4 (184 aa).

Transmembrane regions (helical) follow at residues 22-42 (FCWA…GTSS) and 57-77 (ILFF…LFIS).

This sequence belongs to the Ycf4 family.

It localises to the plastid. The protein resides in the chloroplast thylakoid membrane. Its function is as follows. Seems to be required for the assembly of the photosystem I complex. The chain is Photosystem I assembly protein Ycf4 from Liriodendron tulipifera (Tuliptree).